The primary structure comprises 144 residues: Major allergen Blo t 12 (144 aa).

A signal peptide spans 1–20 (MKSVLIFLVAIALFSANIVS). The segment at 24–77 (QTTRGRHTEPDDHHEKPTTQCTHEETTSTQHHHEEVVTTQTPHHEEKTTTEETH) is disordered. In terms of domain architecture, Chitin-binding type-2 spans 92–144 (HVVCHEEGPIHIQEMCNKYIICSKSGSLWYITVMPCSIGTKFDPISRNCVLDN). An intrachain disulfide couples Cys127 to Cys140.

This Blomia tropicalis (Mite) protein is Major allergen Blo t 12.